The following is a 722-amino-acid chain: Bifunctional UDP-N-acetylglucosamine 2-epimerase/N-acetylmannosamine kinase (722 aa).

Residues Arg-19, Ser-23, Arg-113, His-220, and Asn-253 each coordinate UDP. CMP-N-acetyl-beta-neuraminate contacts are provided by Lys-259, Glu-271, Lys-280, and His-281. UDP contacts are provided by Val-282, Ser-301, Ser-302, Glu-307, and Arg-321. An N-acetylmannosamine kinase region spans residues 406-722 (TLSALAVDLG…VLDYTTRRIH (317 aa)). Asp-413 is a Mg(2+) binding site. Gly-416 serves as a coordination point for an N-acyl-D-mannosamine 6-phosphate. ADP contacts are provided by Thr-417, Asn-418, and Arg-420. 6 residues coordinate an N-acyl-D-mannosamine 6-phosphate: Gly-476, Arg-477, Thr-489, Asn-516, Asp-517, and Gly-545. Positions 476, 477, 489, 516, and 517 each coordinate an N-acyl-D-mannosamine. Residue Asp-517 is part of the active site. Residues Glu-566 and His-569 each contribute to the an N-acyl-D-mannosamine site. His-569 is a binding site for an N-acyl-D-mannosamine 6-phosphate. Zn(2+) is bound by residues His-569, Cys-579, Cys-581, and Cys-586. Glu-588 contributes to the an N-acyl-D-mannosamine 6-phosphate binding site. Glu-588 contacts an N-acyl-D-mannosamine.

It in the N-terminal section; belongs to the UDP-N-acetylglucosamine 2-epimerase family. In the C-terminal section; belongs to the ROK (NagC/XylR) family. Homodimer. Homotetramer. Homohexamer. The hexameric form exhibits both enzyme activities, whereas the dimeric form only catalyzes the phosphorylation of N-acyl-D-mannosamine. In terms of processing, phosphorylated. Phosphorylation by PKC activates the UDP-N-acetylglucosamine 2-epimerase activity. In terms of tissue distribution, widely expressed. Highest expression in liver. Also found at high levels in lung, brain and kidney.

The protein resides in the cytoplasm. It localises to the cytosol. The enzyme catalyses UDP-N-acetyl-alpha-D-glucosamine + H2O = aldehydo-N-acetyl-D-mannosamine + UDP + H(+). It carries out the reaction an N-acyl-D-mannosamine + ATP = an N-acyl-D-mannosamine 6-phosphate + ADP + H(+). It functions in the pathway amino-sugar metabolism; N-acetylneuraminate biosynthesis. With respect to regulation, the UDP-N-acetylglucosamine 2-epimerase activity, in contrast to the N-acetylmannosamine kinase activity, exhibits allosteric regulation by cytidine monophosphate-N-acetylneuraminic acid (CMP-Neu5Ac), the end product of neuraminic acid biosynthesis. Moreover, the activity is contingent upon the oligomeric state of the enzyme. The monomeric form is inactive, while the dimeric form selectively catalyzes the phosphorylation of N-acetylmannosamine. The hexameric form, on the other hand, demonstrates full proficiency in both enzyme activities. Furthermore, the UDP-N-acetylglucosamine 2-epimerase activity is increased by PKC-mediated phosphorylation. Its function is as follows. Bifunctional enzyme that possesses both UDP-N-acetylglucosamine 2-epimerase and N-acetylmannosamine kinase activities, and serves as the initiator of the biosynthetic pathway leading to the production of N-acetylneuraminic acid (NeuAc), a critical precursor in the synthesis of sialic acids. By catalyzing this pivotal and rate-limiting step in sialic acid biosynthesis, this enzyme assumes a pivotal role in governing the regulation of cell surface sialylation, playing a role in embryonic angiogenesis. Sialic acids represent a category of negatively charged sugars that reside on the surface of cells as terminal components of glycoconjugates and mediate important functions in various cellular processes, including cell adhesion, signal transduction, and cellular recognition. This Mus musculus (Mouse) protein is Bifunctional UDP-N-acetylglucosamine 2-epimerase/N-acetylmannosamine kinase.